A 124-amino-acid polypeptide reads, in one-letter code: UPF0231 protein Shewmr4_0656 (124 aa).

Belongs to the UPF0231 family.

The chain is UPF0231 protein Shewmr4_0656 from Shewanella sp. (strain MR-4).